The primary structure comprises 288 residues: Elongation factor Ts (288 aa).

Residues 80–83 (TDFV) are involved in Mg(2+) ion dislocation from EF-Tu.

This sequence belongs to the EF-Ts family.

The protein resides in the cytoplasm. Functionally, associates with the EF-Tu.GDP complex and induces the exchange of GDP to GTP. It remains bound to the aminoacyl-tRNA.EF-Tu.GTP complex up to the GTP hydrolysis stage on the ribosome. This Chromobacterium violaceum (strain ATCC 12472 / DSM 30191 / JCM 1249 / CCUG 213 / NBRC 12614 / NCIMB 9131 / NCTC 9757 / MK) protein is Elongation factor Ts.